We begin with the raw amino-acid sequence, 89 residues long: Small ribosomal subunit protein uS15 (89 aa).

This sequence belongs to the universal ribosomal protein uS15 family. Part of the 30S ribosomal subunit. Forms a bridge to the 50S subunit in the 70S ribosome, contacting the 23S rRNA.

One of the primary rRNA binding proteins, it binds directly to 16S rRNA where it helps nucleate assembly of the platform of the 30S subunit by binding and bridging several RNA helices of the 16S rRNA. Functionally, forms an intersubunit bridge (bridge B4) with the 23S rRNA of the 50S subunit in the ribosome. This Vibrio vulnificus (strain YJ016) protein is Small ribosomal subunit protein uS15.